A 458-amino-acid polypeptide reads, in one-letter code: Biphenyl dioxygenase subunit alpha (458 aa).

One can recognise a Rieske domain in the interval tryptophan 58–alanine 156. Residues cysteine 100, histidine 102, cysteine 120, and histidine 123 each coordinate [2Fe-2S] cluster. 2 residues coordinate Fe cation: histidine 233 and histidine 239.

Belongs to the bacterial ring-hydroxylating dioxygenase alpha subunit family. As to quaternary structure, heterohexamer consisting of three BphA subunits and three BphE subunits. A ferredoxin (BphF) and a ferredoxin reductase (BphG) must be present to obtain activity. It depends on [2Fe-2S] cluster as a cofactor. Fe cation is required as a cofactor.

It catalyses the reaction biphenyl + NADH + O2 + H(+) = (2R,3S)-3-phenylcyclohexa-3,5-diene-1,2-diol + NAD(+). Its pathway is xenobiotic degradation; biphenyl degradation; 2-hydroxy-2,4-pentadienoate and benzoate from biphenyl: step 1/4. The chain is Biphenyl dioxygenase subunit alpha (bphA) from Metapseudomonas furukawaii (Pseudomonas furukawaii).